We begin with the raw amino-acid sequence, 119 residues long: Large ribosomal subunit protein bL20 (119 aa).

The protein belongs to the bacterial ribosomal protein bL20 family.

Functionally, binds directly to 23S ribosomal RNA and is necessary for the in vitro assembly process of the 50S ribosomal subunit. It is not involved in the protein synthesizing functions of that subunit. This Deinococcus geothermalis (strain DSM 11300 / CIP 105573 / AG-3a) protein is Large ribosomal subunit protein bL20.